The chain runs to 279 residues: Movement protein (279 aa).

The tract at residues 247-279 is disordered; sequence ESEELNVESPPAAIGSSSASRSEAFRPQVVNGL. A compositionally biased stretch (low complexity) spans 254–268; sequence ESPPAAIGSSSASRS.

It belongs to the cucumovirus movement protein family.

The protein resides in the host cell junction. Its subcellular location is the host plasmodesma. In terms of biological role, transports viral genome to neighboring plant cells directly through plasmosdesmata, without any budding. The movement protein allows efficient cell to cell propagation, by bypassing the host cell wall barrier. Acts by forming a tubular structure at the host plasmodesmata, enlarging it enough to allow free passage of virion capsids. This is Movement protein from Cucumis sativus (Cucumber).